We begin with the raw amino-acid sequence, 464 residues long: 3-isopropylmalate dehydratase large subunit (464 aa).

Positions 337, 397, and 400 each coordinate [4Fe-4S] cluster.

The protein belongs to the aconitase/IPM isomerase family. LeuC type 1 subfamily. As to quaternary structure, heterodimer of LeuC and LeuD. [4Fe-4S] cluster serves as cofactor.

The enzyme catalyses (2R,3S)-3-isopropylmalate = (2S)-2-isopropylmalate. The protein operates within amino-acid biosynthesis; L-leucine biosynthesis; L-leucine from 3-methyl-2-oxobutanoate: step 2/4. Functionally, catalyzes the isomerization between 2-isopropylmalate and 3-isopropylmalate, via the formation of 2-isopropylmaleate. The polypeptide is 3-isopropylmalate dehydratase large subunit (Bacillus cereus (strain AH820)).